A 354-amino-acid chain; its full sequence is Ferrochelatase (354 aa).

Residues H214 and E295 each contribute to the Fe cation site.

It belongs to the ferrochelatase family.

The protein localises to the cytoplasm. The enzyme catalyses heme b + 2 H(+) = protoporphyrin IX + Fe(2+). It participates in porphyrin-containing compound metabolism; protoheme biosynthesis; protoheme from protoporphyrin-IX: step 1/1. Catalyzes the ferrous insertion into protoporphyrin IX. The chain is Ferrochelatase from Burkholderia orbicola (strain AU 1054).